A 757-amino-acid polypeptide reads, in one-letter code: Polyribonucleotide nucleotidyltransferase (757 aa).

Mg(2+)-binding residues include aspartate 525 and aspartate 531. Residues 591 to 650 (PRVISVNIPVDKIGELIGPKGKTINAIQDETGADISIEEDGAVYIGAVDGPSAEAARAQV) form the KH domain. The S1 motif domain maps to 662–734 (GESFLGTVVK…DRGKLSLAPV (73 aa)). Residues 736–757 (EEAADQEGSAAASDGPEAPAEG) form a disordered region.

Belongs to the polyribonucleotide nucleotidyltransferase family. Mg(2+) serves as cofactor.

The protein localises to the cytoplasm. The enzyme catalyses RNA(n+1) + phosphate = RNA(n) + a ribonucleoside 5'-diphosphate. Its function is as follows. Involved in mRNA degradation. Catalyzes the phosphorolysis of single-stranded polyribonucleotides processively in the 3'- to 5'-direction. The protein is Polyribonucleotide nucleotidyltransferase of Clavibacter sepedonicus (Clavibacter michiganensis subsp. sepedonicus).